The chain runs to 86 residues: Large ribosomal subunit protein eL43 (86 aa).

The segment at 38 to 59 (CPVCGRKAVRRISTGIWQCQKC) adopts a C4-type zinc-finger fold.

This sequence belongs to the eukaryotic ribosomal protein eL43 family. Zn(2+) serves as cofactor.

The sequence is that of Large ribosomal subunit protein eL43 from Thermococcus gammatolerans (strain DSM 15229 / JCM 11827 / EJ3).